Consider the following 639-residue polypeptide: Developmental regulatory protein wetA (639 aa).

Disordered regions lie at residues 65–97, 206–369, 418–552, and 587–613; these read MDPSHHHHHPHHHAHGESSTTSSGVSNADEFDF, TTMR…SAAS, GLLI…SADE, and LMTGVAPSGSSKTKARREKEAQERRRR. Residues 69 to 78 show a composition bias toward basic residues; the sequence is HHHHHPHHHA. Composition is skewed to polar residues over residues 81 to 90 and 214 to 226; these read ESSTTSSGVS and VSQTLQRAVSPSM. Residues 246–255 show a composition bias toward basic residues; it reads RGRRAHRAHT. Composition is skewed to low complexity over residues 256–275, 346–369, and 506–526; these read QHALQHQQQQHQHQQQQAHQ, QQQWQQQQQQQHNGAQQHQWSAAS, and HSSGGSAASSSQRSASGRVSV.

It belongs to the wetA family.

Its function is as follows. BrlA, abaA and wetA are pivotal regulators of conidiophore development and conidium maturation. They act individually and together to regulate their own expression and that of numerous other sporulation-specific genes. Acts as a crucial regulator of both conidiation capacity and conidial quality. Plays a role in virulence. The chain is Developmental regulatory protein wetA from Beauveria bassiana (strain ARSEF 2860) (White muscardine disease fungus).